The sequence spans 534 residues: (R)-citramalate synthase (534 aa).

A Pyruvate carboxyltransferase domain is found at 11–274; it reads FHVFDTTLRD…KQVLPEGRLR (264 aa).

This sequence belongs to the alpha-IPM synthase/homocitrate synthase family.

It carries out the reaction pyruvate + acetyl-CoA + H2O = (3R)-citramalate + CoA + H(+). It participates in amino-acid biosynthesis; L-isoleucine biosynthesis; 2-oxobutanoate from pyruvate: step 1/3. Catalyzes the condensation of pyruvate and acetyl-coenzyme A to form (R)-citramalate. In Streptomyces coelicolor (strain ATCC BAA-471 / A3(2) / M145), this protein is (R)-citramalate synthase.